A 337-amino-acid polypeptide reads, in one-letter code: Vacuolar protein sorting-associated protein 26B-A (337 aa).

Residues 313 to 337 are disordered; it reads RFEGTSHPETRPQHSGAAAVEQEHE.

This sequence belongs to the VPS26 family. In terms of assembly, component of the heterotrimeric retromer cargo-selective complex (CSC) which is believed to associate with variable sorting nexins to form functionally distinct retromer complex variants.

It is found in the cytoplasm. The protein resides in the endosome membrane. The protein localises to the early endosome. In terms of biological role, acts as a component of the retromer cargo-selective complex (CSC). The CSC is believed to be the core functional component of retromer or respective retromer complex variants acting to prevent missorting of selected transmembrane cargo proteins into the lysosomal degradation pathway. Retromer mediates retrograde transport of cargo proteins from endosomes to the trans-Golgi network (TGN). In Xenopus laevis (African clawed frog), this protein is Vacuolar protein sorting-associated protein 26B-A (vps26b-a).